The sequence spans 49 residues: MASFDAAERRNLDRHICMRCNARNSPDADRCRKCGYTNLRPKAKERRAA.

This sequence belongs to the eukaryotic ribosomal protein eL40 family.

The protein is Large ribosomal subunit protein eL40 of Halorubrum lacusprofundi (strain ATCC 49239 / DSM 5036 / JCM 8891 / ACAM 34).